The primary structure comprises 299 residues: Probable lipid kinase YegS (299 aa).

Residues 2–133 form the DAGKc domain; it reads ANFPASLLIL…IDMARVNDKT (132 aa). ATP-binding positions include Thr-40, 66 to 72, and Thr-95; that span reads GDGTINE. The Mg(2+) site is built by Leu-215, Asp-218, and Leu-220. Glu-271 functions as the Proton acceptor in the catalytic mechanism.

This sequence belongs to the diacylglycerol/lipid kinase family. YegS lipid kinase subfamily. Requires Mg(2+) as cofactor. Ca(2+) serves as cofactor.

The protein resides in the cytoplasm. Functionally, probably phosphorylates lipids; the in vivo substrate is unknown. The protein is Probable lipid kinase YegS of Salmonella agona (strain SL483).